Here is a 281-residue protein sequence, read N- to C-terminus: NADPH-dependent 7-cyano-7-deazaguanine reductase (281 aa).

A substrate-binding site is contributed by 87-89; sequence VES. 89-90 contributes to the NADPH binding site; sequence SK. The active-site Thioimide intermediate is the C188. D195 (proton donor) is an active-site residue. Residue 227–228 coordinates substrate; the sequence is HE. Position 256–257 (256–257) interacts with NADPH; it reads RG.

It belongs to the GTP cyclohydrolase I family. QueF type 2 subfamily. In terms of assembly, homodimer.

The protein localises to the cytoplasm. The enzyme catalyses 7-aminomethyl-7-carbaguanine + 2 NADP(+) = 7-cyano-7-deazaguanine + 2 NADPH + 3 H(+). It functions in the pathway tRNA modification; tRNA-queuosine biosynthesis. In terms of biological role, catalyzes the NADPH-dependent reduction of 7-cyano-7-deazaguanine (preQ0) to 7-aminomethyl-7-deazaguanine (preQ1). The sequence is that of NADPH-dependent 7-cyano-7-deazaguanine reductase from Aliivibrio salmonicida (strain LFI1238) (Vibrio salmonicida (strain LFI1238)).